Reading from the N-terminus, the 46-residue chain is Antimicrobial peptide eNAP-1 (46 aa).

2 cysteine pairs are disulfide-bonded: cysteine 4-cysteine 16 and cysteine 10-cysteine 26.

It belongs to the granulin family.

Its subcellular location is the secreted. In terms of biological role, has antimicrobial activity against Gram-negative and Gram-positive bacteria. The chain is Antimicrobial peptide eNAP-1 from Equus caballus (Horse).